The primary structure comprises 389 residues: 1-deoxy-D-xylulose 5-phosphate reductoisomerase (389 aa).

NADPH is bound by residues Ser11, Gly12, Ser13, Val14, Asn39, and Asn122. Residue Lys123 coordinates 1-deoxy-D-xylulose 5-phosphate. Residue Glu124 participates in NADPH binding. Mn(2+) is bound at residue Asp148. The 1-deoxy-D-xylulose 5-phosphate site is built by Ser149, Glu150, Ser174, and His197. Glu150 lines the Mn(2+) pocket. Gly203 is an NADPH binding site. 1-deoxy-D-xylulose 5-phosphate-binding residues include Ser210, Asn215, Lys216, and Glu219. Glu219 lines the Mn(2+) pocket.

The protein belongs to the DXR family. It depends on Mg(2+) as a cofactor. Mn(2+) serves as cofactor.

It catalyses the reaction 2-C-methyl-D-erythritol 4-phosphate + NADP(+) = 1-deoxy-D-xylulose 5-phosphate + NADPH + H(+). It functions in the pathway isoprenoid biosynthesis; isopentenyl diphosphate biosynthesis via DXP pathway; isopentenyl diphosphate from 1-deoxy-D-xylulose 5-phosphate: step 1/6. Its function is as follows. Catalyzes the NADPH-dependent rearrangement and reduction of 1-deoxy-D-xylulose-5-phosphate (DXP) to 2-C-methyl-D-erythritol 4-phosphate (MEP). The protein is 1-deoxy-D-xylulose 5-phosphate reductoisomerase of Leptospira interrogans serogroup Icterohaemorrhagiae serovar Lai (strain 56601).